Consider the following 439-residue polypeptide: Protease Do-like 1, chloroplastic (439 aa).

The segment at 154–323 (QGSGSGFVWD…IPVDTVGGIV (170 aa)) is serine protease. Active-site charge relay system residues include H173, D203, and S282. Positions 326–423 (LVRFGKVTRP…EVTVEVLRGD (98 aa)) constitute a PDZ domain.

This sequence belongs to the peptidase S1C family. Interacts with PTAC16 and other potential targets for degradation under high light conditions.

It localises to the plastid. It is found in the chloroplast thylakoid membrane. Inhibited by phenylmethylsulfonyl fluoride and O-phenanthroline. Its function is as follows. Serine protease that is required at high temperature. May be involved in the degradation of damaged proteins. In vivo, can degrade beta-casein. In Arabidopsis thaliana (Mouse-ear cress), this protein is Protease Do-like 1, chloroplastic (DEGP1).